Consider the following 392-residue polypeptide: MLRAGCRAALARRHLSSAPEGLKQTPLDALHRARGGRMVPFAGWSLPVQYGRGHLESHLHTRRHCSLFDVSHMLQTRVYGRDRVRFLESLVVGDIAELRPGQGTLTLLTNERGDIVDDLIVTNTAEDHLYVVSNAGCADKDRAVMEGRAAELRAAGGDVHLEVSGQRAAGVQGPSMAQVLQAGLPDDLTKLTFMTSTATTVFGVPGCRVTRCGYTGEDGVEISVPAGRAVELAERLLGCPEVWPAGLAARDSLRLEAGLCLYGNDIDESTTPVEAGLLWTLGKRRRTAMDFPGAAIIMEQVKEKPKRKRVGLTSVGPPLRPPAAILGPEGTPVGTVTSGCPSPSLGKNIAMGYVQAAHSRPGTTLTVEVRKKQHPALVTKMPFVPTHYYMAK.

The transit peptide at Met-1–Ser-16 directs the protein to the mitochondrion. The substrate site is built by Glu-221, Arg-250, and Tyr-388.

It belongs to the GcvT family. As to quaternary structure, the glycine cleavage system is composed of four proteins: P, T, L and H.

Its subcellular location is the mitochondrion. It carries out the reaction N(6)-[(R)-S(8)-aminomethyldihydrolipoyl]-L-lysyl-[protein] + (6S)-5,6,7,8-tetrahydrofolate = N(6)-[(R)-dihydrolipoyl]-L-lysyl-[protein] + (6R)-5,10-methylene-5,6,7,8-tetrahydrofolate + NH4(+). The glycine cleavage system catalyzes the degradation of glycine. This is Aminomethyltransferase, mitochondrial from Gallus gallus (Chicken).